We begin with the raw amino-acid sequence, 516 residues long: Exodeoxyribonuclease 7 large subunit (516 aa).

The protein belongs to the XseA family. As to quaternary structure, heterooligomer composed of large and small subunits.

The protein localises to the cytoplasm. The catalysed reaction is Exonucleolytic cleavage in either 5'- to 3'- or 3'- to 5'-direction to yield nucleoside 5'-phosphates.. In terms of biological role, bidirectionally degrades single-stranded DNA into large acid-insoluble oligonucleotides, which are then degraded further into small acid-soluble oligonucleotides. The chain is Exodeoxyribonuclease 7 large subunit from Chlamydia trachomatis serovar L2 (strain ATCC VR-902B / DSM 19102 / 434/Bu).